The sequence spans 437 residues: Trigger factor (437 aa).

The region spanning 161–246 (GDQVNINFVG…VNSVSEAVLP (86 aa)) is the PPIase FKBP-type domain.

This sequence belongs to the FKBP-type PPIase family. Tig subfamily.

It localises to the cytoplasm. The enzyme catalyses [protein]-peptidylproline (omega=180) = [protein]-peptidylproline (omega=0). Functionally, involved in protein export. Acts as a chaperone by maintaining the newly synthesized protein in an open conformation. Functions as a peptidyl-prolyl cis-trans isomerase. The sequence is that of Trigger factor from Cellvibrio japonicus (strain Ueda107) (Pseudomonas fluorescens subsp. cellulosa).